Reading from the N-terminus, the 95-residue chain is Small ribosomal subunit protein bS6 (95 aa).

The protein belongs to the bacterial ribosomal protein bS6 family.

Binds together with bS18 to 16S ribosomal RNA. The polypeptide is Small ribosomal subunit protein bS6 (rpsF) (Halalkalibacterium halodurans (strain ATCC BAA-125 / DSM 18197 / FERM 7344 / JCM 9153 / C-125) (Bacillus halodurans)).